A 232-amino-acid chain; its full sequence is UPF0502 protein Aave_3438 (232 aa).

The protein belongs to the UPF0502 family.

The sequence is that of UPF0502 protein Aave_3438 from Paracidovorax citrulli (strain AAC00-1) (Acidovorax citrulli).